The primary structure comprises 179 residues: MSLKTKYRDIIVPKLMKEFGYTNIHQVPKVVKVTINRGLGEGAQNAKALESSLAEIAKIAGQKPVVTRAKKAIAGFKIRAGMPVGLMVTLRGDRRDAFLERLINLSLPRIRDFRGISPRSFDGRGNYTLGLREQLIFPEITYDSIDQIRGMDITIVTSANSDEEGRALLRELGMPFREN.

This sequence belongs to the universal ribosomal protein uL5 family. Part of the 50S ribosomal subunit; part of the 5S rRNA/L5/L18/L25 subcomplex. Contacts the 5S rRNA and the P site tRNA. Forms a bridge to the 30S subunit in the 70S ribosome.

Its function is as follows. This is one of the proteins that bind and probably mediate the attachment of the 5S RNA into the large ribosomal subunit, where it forms part of the central protuberance. In the 70S ribosome it contacts protein S13 of the 30S subunit (bridge B1b), connecting the 2 subunits; this bridge is implicated in subunit movement. Contacts the P site tRNA; the 5S rRNA and some of its associated proteins might help stabilize positioning of ribosome-bound tRNAs. The protein is Large ribosomal subunit protein uL5 of Synechococcus elongatus (strain ATCC 33912 / PCC 7942 / FACHB-805) (Anacystis nidulans R2).